A 367-amino-acid chain; its full sequence is Choline-phosphate cytidylyltransferase A (367 aa).

An N-acetylmethionine modification is found at M1. Residues 1–33 are disordered; that stretch reads MDAQCSAKVNARKRRKEAPGPNGATEEDGVPSK. An N6-acetyllysine modification is found at K8. I84, F85, H92, and K122 together coordinate CTP. Residues K122 and W151 each contribute to the phosphocholine site. Residues H168, D169, Y173, Q195, R196, T197, and I200 each contribute to the CTP site. Amphipathic stretches follow at residues 228–287 and 298–315; these read KELN…EFIG and ALKH…QAIS. S233 carries the post-translational modification Phosphoserine. Residues 272–293 are autoinhibitory (AI); the sequence is IDLIQKWEEKSREFIGSFLEMF. A disordered region spans residues 313–367; that stretch reads AISPKQSPSSSPTRERSPSPSFRWPFSGKTSPPCSPANLSRHKAAAYDISEDEED. Residues S315, S319, S321, S322, and S323 each carry the phosphoserine modification. Repeat 1 spans residues 319 to 324; that stretch reads SPSSSP. Residues 319 to 339 show a composition bias toward low complexity; the sequence is SPSSSPTRERSPSPSFRWPFS. A Phosphothreonine modification is found at T325. S329, S331, and S333 each carry phosphoserine. The stretch at 329–333 is one 2; approximate repeat; the sequence is SPSPS. Phosphothreonine is present on T342. S343, S347, S352, and S362 each carry phosphoserine. Repeat unit 3 spans residues 343–348; sequence SPPCSP.

This sequence belongs to the cytidylyltransferase family. In terms of assembly, homodimer. In terms of processing, the serine residues of the C-terminus are phosphorylated. The inactive soluble form is stabilized by phosphorylation, the active membrane bound form is promoted by anionic lipids or diacylglycerol, and is stabilized by dephosphorylation. Post-translationally, monoubiquitinated by the SCF(FBXL2) complex, leading to proteasomal degradation. In terms of tissue distribution, brain, placenta, liver, fetal and adult lung.

It localises to the cytoplasm. Its subcellular location is the cytosol. The protein localises to the membrane. The protein resides in the endoplasmic reticulum membrane. It is found in the nucleus. It carries out the reaction phosphocholine + CTP + H(+) = CDP-choline + diphosphate. Its pathway is phospholipid metabolism; phosphatidylcholine biosynthesis; phosphatidylcholine from phosphocholine: step 1/2. Interconverts between an inactive cytosolic form and an active membrane-bound form. Activation involves disruption of an inhibitory interaction between helices at the base of the active site and the autoinhibitory (AI) region. Activated by anionic lipid vesicles and by oleic acid or diacylglycerol-containing phosphatidylcholine vesicles. Functionally, catalyzes the key rate-limiting step in the CDP-choline pathway for phosphatidylcholine biosynthesis. In Homo sapiens (Human), this protein is Choline-phosphate cytidylyltransferase A (PCYT1A).